A 367-amino-acid polypeptide reads, in one-letter code: 4-hydroxy-3-methylbut-2-en-1-yl diphosphate synthase (flavodoxin) (367 aa).

The [4Fe-4S] cluster site is built by C270, C273, C305, and E312.

Belongs to the IspG family. The cofactor is [4Fe-4S] cluster.

The catalysed reaction is (2E)-4-hydroxy-3-methylbut-2-enyl diphosphate + oxidized [flavodoxin] + H2O + 2 H(+) = 2-C-methyl-D-erythritol 2,4-cyclic diphosphate + reduced [flavodoxin]. Its pathway is isoprenoid biosynthesis; isopentenyl diphosphate biosynthesis via DXP pathway; isopentenyl diphosphate from 1-deoxy-D-xylulose 5-phosphate: step 5/6. Functionally, converts 2C-methyl-D-erythritol 2,4-cyclodiphosphate (ME-2,4cPP) into 1-hydroxy-2-methyl-2-(E)-butenyl 4-diphosphate. The protein is 4-hydroxy-3-methylbut-2-en-1-yl diphosphate synthase (flavodoxin) of Buchnera aphidicola subsp. Schizaphis graminum (strain Sg).